A 500-amino-acid polypeptide reads, in one-letter code: Zinc finger protein ENHYDROUS (500 aa).

Residues 1 to 42 (MPVDLDNSSTVSGDASVSSTGNQNLTPKSVGKKKRNLPGMPD) are disordered. The span at 8–21 (SSTVSGDASVSSTG) shows a compositional bias: low complexity. Position 51 is a phosphoserine (serine 51). 2 C2H2-type zinc fingers span residues 61–83 (FVCE…RRGH) and 102–132 (YVCP…CRKH). The short motif at 124–131 (IKKHFCRK) is the Nuclear localization signal element. The C2H2-type 2; degenerate zinc finger occupies 137 to 160 (WKCEKCSKKYAVQSDWKAHSKICG). 8 residues coordinate Zn(2+): cysteine 139, cysteine 142, histidine 155, cysteine 159, cysteine 166, cysteine 168, histidine 181, and cysteine 185. The segment at 164–187 (YKCDCGTLFSRRDSFITHRAFCDA) adopts a CCHC-type 2; atypical zinc-finger fold. An SHR-binding region spans residues 174 to 186 (RRDSFITHRAFCD). Residues 196-236 (HTQSKKLYPETVTRKNPEIEQKSPAAVESSPSLPPSSPPSV) are disordered. The span at 207 to 216 (VTRKNPEIEQ) shows a compositional bias: basic and acidic residues.

In terms of assembly, interacts with the DELLA proteins (e.g. GAI/RGA2, RGA, RGL1, RGL2 and RGLG3), acting as coactivators. In terms of tissue distribution, at 3 days post anthesis (DPA), expressed in the chalazal endosperm region. By 6 DPA, expressed in the endosperm and embryo. In fully germinated seed, strongest expression in the root tip and not detected in the cotyledons. In 4-days old seedlings, restricted to the vasculature of the cotyledons, the shoot apical meristem region, and the root tip. By 8 days, restricted to newly emerged leaves.

It is found in the nucleus. In terms of biological role, transcription factor promoting the transition to germination by regulating light and hormonal signaling during seed maturation. Acts as a positive regulator of phytochrome and/or gibberellin action. This Arabidopsis thaliana (Mouse-ear cress) protein is Zinc finger protein ENHYDROUS.